Here is a 260-residue protein sequence, read N- to C-terminus: uncharacterized protein (260 aa).

This is an uncharacterized protein from Saccharomyces cerevisiae (strain ATCC 204508 / S288c) (Baker's yeast).